The chain runs to 130 residues: Methylglyoxal synthase (130 aa).

Residues 1–130 (MSKPRIALIA…DLARNMQDVC (130 aa)) enclose the MGS-like domain. Residues His-11, Lys-15, 37–40 (TGTT), and 57–58 (SG) contribute to the substrate site. Residue Asp-63 is the Proton donor/acceptor of the active site. A substrate-binding site is contributed by His-90.

The protein belongs to the methylglyoxal synthase family.

The catalysed reaction is dihydroxyacetone phosphate = methylglyoxal + phosphate. In terms of biological role, catalyzes the formation of methylglyoxal from dihydroxyacetone phosphate. This chain is Methylglyoxal synthase, found in Burkholderia orbicola (strain AU 1054).